Consider the following 357-residue polypeptide: Phenylalanine--tRNA ligase alpha subunit (357 aa).

E257 provides a ligand contact to Mg(2+).

This sequence belongs to the class-II aminoacyl-tRNA synthetase family. Phe-tRNA synthetase alpha subunit type 1 subfamily. As to quaternary structure, tetramer of two alpha and two beta subunits. The cofactor is Mg(2+).

It is found in the cytoplasm. It carries out the reaction tRNA(Phe) + L-phenylalanine + ATP = L-phenylalanyl-tRNA(Phe) + AMP + diphosphate + H(+). In Ruegeria pomeroyi (strain ATCC 700808 / DSM 15171 / DSS-3) (Silicibacter pomeroyi), this protein is Phenylalanine--tRNA ligase alpha subunit.